The primary structure comprises 162 residues: Ribosomal RNA large subunit methyltransferase H (162 aa).

An S-adenosyl-L-methionine-binding site is contributed by Gly-108.

This sequence belongs to the RNA methyltransferase RlmH family. In terms of assembly, homodimer.

The protein localises to the cytoplasm. It catalyses the reaction pseudouridine(1915) in 23S rRNA + S-adenosyl-L-methionine = N(3)-methylpseudouridine(1915) in 23S rRNA + S-adenosyl-L-homocysteine + H(+). In terms of biological role, specifically methylates the pseudouridine at position 1915 (m3Psi1915) in 23S rRNA. The sequence is that of Ribosomal RNA large subunit methyltransferase H from Methylobacterium nodulans (strain LMG 21967 / CNCM I-2342 / ORS 2060).